We begin with the raw amino-acid sequence, 384 residues long: Putative F-box/kelch-repeat protein At3g27910 (384 aa).

Residues 27–79 form the F-box domain; that stretch reads SPTSLPLPDEIIVNCFAYIPRCDYPSLSLVSKTFNRLITSIELNIVRSLFQRT. Kelch repeat units follow at residues 138–184, 185–235, 237–274, and 275–323; these read KIYV…IVDG, KIYV…VMNK, IYIMDRGNGIVFDPKKGVWERDFLLDRDWVVGSCVIDN, and MLYT…MANH.

This chain is Putative F-box/kelch-repeat protein At3g27910, found in Arabidopsis thaliana (Mouse-ear cress).